A 402-amino-acid chain; its full sequence is D-galactonate dehydratase family member RspA (402 aa).

Positions 37 and 122 each coordinate substrate. The active-site Proton donor/acceptor is Y159. Residue D210 coordinates Mg(2+). Catalysis depends on H212, which acts as the Proton donor/acceptor. The Mg(2+) site is built by E236 and E262. Substrate-binding residues include E262, R283, H312, D316, and E339.

This sequence belongs to the mandelate racemase/muconate lactonizing enzyme family. GalD subfamily. It depends on Mg(2+) as a cofactor.

It catalyses the reaction D-mannonate = 2-dehydro-3-deoxy-D-gluconate + H2O. In terms of biological role, has low D-mannonate dehydratase activity (in vitro), suggesting that this is not a physiological substrate and that it has no significant role in D-mannonate degradation in vivo. Has no detectable activity with a panel of 70 other acid sugars (in vitro). The protein is D-galactonate dehydratase family member RspA (rspA) of Cellvibrio japonicus (strain Ueda107) (Pseudomonas fluorescens subsp. cellulosa).